The sequence spans 498 residues: MRMNPTTSSSGVATLDKKNLGRIAQIIGPVLDVAFPPGKMPNIYNALVVKGRDTVGQPINVTCEVQQLLGNNRVRAVAMSATDGLTRGMDVIDTGAPLSVPVGGATLGRIFNVLGEPIDNLGPVDNSTTFPIHRSAPAFIQLDTKLSIFETGIKVVDLLAPYRRGGKIGLFGGAGVGKTVLIMELINNIAKAHGGVSVFGGVGERTREGNDLYMEMKESGVINEQNIAESKVALVYGQMNEPPGARMRVGLTALTMAEYFRDVNEQDVLLFVDNIFRFVQAGSEVSALLGRMPSAVGYQPTLSTEMGSLQERITSTKEGSITSIQAVYVPADDLTDPAPATTFAHLDATTVLSRGLAAKGIYPAVDPLDSTSTMLQPRIVGDEHYETAQQVKQTLQRYKELQDIIAILGLDELSEEDRLTVARARKIERFLSQPFFVAEVFTGSPGKYVGLAETIRGFQLILSGELDGLPEQAFYLVGNIDEATAKAMNLEMESNSKK.

Position 172–179 (172–179 (GGAGVGKT)) interacts with ATP.

It belongs to the ATPase alpha/beta chains family. In terms of assembly, F-type ATPases have 2 components, CF(1) - the catalytic core - and CF(0) - the membrane proton channel. CF(1) has five subunits: alpha(3), beta(3), gamma(1), delta(1), epsilon(1). CF(0) has four main subunits: a(1), b(1), b'(1) and c(9-12).

It localises to the plastid. Its subcellular location is the chloroplast thylakoid membrane. It carries out the reaction ATP + H2O + 4 H(+)(in) = ADP + phosphate + 5 H(+)(out). Its function is as follows. Produces ATP from ADP in the presence of a proton gradient across the membrane. The catalytic sites are hosted primarily by the beta subunits. This is ATP synthase subunit beta, chloroplastic from Helianthus annuus (Common sunflower).